Consider the following 365-residue polypeptide: Probable cinnamyl alcohol dehydrogenase (365 aa).

Cys-47 contributes to the Zn(2+) binding site. Residue Thr-49 participates in NADP(+) binding. Zn(2+)-binding residues include His-69, Glu-70, Cys-100, Cys-103, Cys-106, Cys-114, and Cys-163. NADP(+) contacts are provided by residues Thr-167, Gly-188–Gly-193, Ser-211–Lys-216, Thr-251, Gly-275, and Ser-298–Ile-300.

The protein belongs to the zinc-containing alcohol dehydrogenase family. As to quaternary structure, homodimer. It depends on Zn(2+) as a cofactor.

It carries out the reaction (E)-cinnamyl alcohol + NADP(+) = (E)-cinnamaldehyde + NADPH + H(+). It catalyses the reaction (E)-coniferol + NADP(+) = (E)-coniferaldehyde + NADPH + H(+). The catalysed reaction is (E)-sinapyl alcohol + NADP(+) = (E)-sinapaldehyde + NADPH + H(+). The enzyme catalyses (E)-4-coumaroyl alcohol + NADP(+) = (E)-4-coumaraldehyde + NADPH + H(+). It carries out the reaction (E)-caffeyl alcohol + NADP(+) = (E)-caffeyl aldehyde + NADPH + H(+). The protein operates within aromatic compound metabolism; phenylpropanoid biosynthesis. Functionally, involved in lignin biosynthesis. Catalyzes the final step specific for the production of lignin monomers. Catalyzes the NADPH-dependent reduction of coniferaldehyde, 5-hydroxyconiferaldehyde, sinapaldehyde, 4-coumaraldehyde and caffeyl aldehyde to their respective alcohols. The polypeptide is Probable cinnamyl alcohol dehydrogenase (CAD) (Saccharum officinarum (Sugarcane)).